The chain runs to 438 residues: Elongation factor 1-alpha (438 aa).

Positions 5 to 228 (KPHLNLVVIG…ALDSLEPPPK (224 aa)) constitute a tr-type G domain. The segment at 14 to 21 (GHVDHGKS) is G1. 14–21 (GHVDHGKS) serves as a coordination point for GTP. A Mg(2+)-binding site is contributed by Ser21. A G2 region spans residues 70–74 (GVTIA). The tract at residues 91 to 94 (DAPG) is G3. Residues 91-95 (DAPGH) and 153-156 (NKMD) contribute to the GTP site. A G4 region spans residues 153–156 (NKMD). The interval 194 to 196 (SAW) is G5.

This sequence belongs to the TRAFAC class translation factor GTPase superfamily. Classic translation factor GTPase family. EF-Tu/EF-1A subfamily.

The protein resides in the cytoplasm. It carries out the reaction GTP + H2O = GDP + phosphate + H(+). Its function is as follows. GTP hydrolase that promotes the GTP-dependent binding of aminoacyl-tRNA to the A-site of ribosomes during protein biosynthesis. This Staphylothermus marinus (strain ATCC 43588 / DSM 3639 / JCM 9404 / F1) protein is Elongation factor 1-alpha.